The chain runs to 448 residues: Adenylosuccinate synthetase (448 aa).

GTP-binding positions include 36–42 (GDEGKGK) and 64–66 (GHT). Aspartate 37 (proton acceptor) is an active-site residue. Residues aspartate 37 and glycine 64 each contribute to the Mg(2+) site. IMP is bound by residues 37–40 (DEGK), 62–65 (NAGH), threonine 154, arginine 168, asparagine 246, threonine 261, and arginine 325. Catalysis depends on histidine 65, which acts as the Proton donor. 321 to 327 (VTTKRKR) is a substrate binding site. Residues arginine 327, 353-355 (KLD), and 436-438 (GVG) contribute to the GTP site.

Belongs to the adenylosuccinate synthetase family. Homodimer. Requires Mg(2+) as cofactor.

It is found in the cytoplasm. The catalysed reaction is IMP + L-aspartate + GTP = N(6)-(1,2-dicarboxyethyl)-AMP + GDP + phosphate + 2 H(+). It participates in purine metabolism; AMP biosynthesis via de novo pathway; AMP from IMP: step 1/2. Plays an important role in the de novo pathway and in the salvage pathway of purine nucleotide biosynthesis. Catalyzes the first committed step in the biosynthesis of AMP from IMP. The chain is Adenylosuccinate synthetase from Drosophila ananassae (Fruit fly).